Here is a 440-residue protein sequence, read N- to C-terminus: MFFISKLSLSNIHVRLTAKGLLRNLQLLSGCKLAVGFLAVDKNKSRTNSKNPQPPTNGQPDLVPPESKSRNVEYYKAQCEKKNQTIRQLENTLLSNNRRFEAVAVVIKHLYAEHDEVMKQRRDLSQELVTLREELVSSGHSCERLEQEKEDLRSAFDGVLQKVQEQHRLDLADLEERLKTFYSTEWEKVHQAYQEEADKCKAQMEQQLEEIRSKHEALKKELESSHIEEVDGLKQQFEESFKGFKQSHEKEMQNLNETLKESEETLSNQIQDLMTENDSLKEKLNAEVKRRMELAEKTQDSHTLYLEQELESLKVVLDIKNKQIHEQDKKLMQIDKLMERNVKLDECLKKLQQENEDLKARMDRHAALSRQLSTEQAVLQESLQKESKVNKRLSMENEELLWKLHNGDLNSPRKISPSPSLNLQSPRTSGMFSSPPVSPR.

The segment at Lys-44 to Ser-67 is disordered. A coiled-coil region spans residues Ser-69–Leu-401. A disordered region spans residues Gly-407–Arg-440. Positions Pro-417–Phe-432 are enriched in polar residues.

The protein belongs to the MTUS1 family. As to quaternary structure, homodimer.

The protein localises to the mitochondrion. It localises to the golgi apparatus. The protein resides in the cell membrane. Its subcellular location is the nucleus. Its function is as follows. May inhibit cell proliferation. The polypeptide is Microtubule-associated tumor suppressor 1 homolog A (mtus1a) (Danio rerio (Zebrafish)).